The following is a 219-amino-acid chain: RNA-free ribonuclease P (219 aa).

It belongs to the HARP family.

The catalysed reaction is Endonucleolytic cleavage of RNA, removing 5'-extranucleotides from tRNA precursor.. Functionally, RNA-free RNase P that catalyzes the removal of the 5'-leader sequence from pre-tRNA to produce the mature 5'-terminus. The sequence is that of RNA-free ribonuclease P from Staphylothermus marinus (strain ATCC 43588 / DSM 3639 / JCM 9404 / F1).